The primary structure comprises 503 residues: Annexin A11 (503 aa).

2 stretches are compositionally biased toward pro residues: residues 80 to 117 and 123 to 167; these read GYPP…PGMP and PGAP…PVPS. Residues 80-172 are disordered; it reads GYPPVPPGGF…QPVPSYPGYS (93 aa). Annexin repeat units lie at residues 198-269, 270-341, 353-425, and 429-500; these read FDPL…ALMK, TPVL…SLSQ, SLVQ…AVVK, and NTPA…KICG. N6-acetyllysine is present on residues lysine 246 and lysine 253. The residue at position 477 (lysine 477) is an N6-acetyllysine.

The protein belongs to the annexin family. Interacts with S100A6. Interacts with PDCD6 in a calcium-dependent manner. Interacts with KIF23 during cytokinesis.

The protein resides in the cytoplasm. Its subcellular location is the melanosome. It is found in the nucleus envelope. The protein localises to the nucleus. It localises to the nucleoplasm. The protein resides in the cytoskeleton. Its subcellular location is the spindle. Its function is as follows. Required for midbody formation and completion of the terminal phase of cytokinesis. Binds specifically to calcyclin in a calcium-dependent manner. This chain is Annexin A11 (Anxa11), found in Mus musculus (Mouse).